The chain runs to 207 residues: dITP/XTP pyrophosphatase (207 aa).

Substrate is bound at residue 7–12 (SNNAKK). Asp-72 functions as the Proton acceptor in the catalytic mechanism. Asp-72 serves as a coordination point for Mg(2+). Substrate is bound by residues Ser-73, 155 to 158 (FGYD), Lys-184, and 189 to 190 (HR).

The protein belongs to the HAM1 NTPase family. Homodimer. It depends on Mg(2+) as a cofactor.

The catalysed reaction is XTP + H2O = XMP + diphosphate + H(+). It catalyses the reaction dITP + H2O = dIMP + diphosphate + H(+). It carries out the reaction ITP + H2O = IMP + diphosphate + H(+). Pyrophosphatase that catalyzes the hydrolysis of nucleoside triphosphates to their monophosphate derivatives, with a high preference for the non-canonical purine nucleotides XTP (xanthosine triphosphate), dITP (deoxyinosine triphosphate) and ITP. Seems to function as a house-cleaning enzyme that removes non-canonical purine nucleotides from the nucleotide pool, thus preventing their incorporation into DNA/RNA and avoiding chromosomal lesions. The sequence is that of dITP/XTP pyrophosphatase from Corynebacterium efficiens (strain DSM 44549 / YS-314 / AJ 12310 / JCM 11189 / NBRC 100395).